The sequence spans 187 residues: Large ribosomal subunit protein bL25 (187 aa).

Belongs to the bacterial ribosomal protein bL25 family. CTC subfamily. In terms of assembly, part of the 50S ribosomal subunit; part of the 5S rRNA/L5/L18/L25 subcomplex. Contacts the 5S rRNA. Binds to the 5S rRNA independently of L5 and L18.

Functionally, this is one of the proteins that binds to the 5S RNA in the ribosome where it forms part of the central protuberance. This Tropheryma whipplei (strain Twist) (Whipple's bacillus) protein is Large ribosomal subunit protein bL25.